The following is a 1038-amino-acid chain: Isoleucine--tRNA ligase (1038 aa).

The 'HIGH' region motif lies at 47–57 (PFATGLPHYGH). The 'KMSKS' region signature appears at 591 to 595 (KMSKR). Lys594 provides a ligand contact to ATP.

It belongs to the class-I aminoacyl-tRNA synthetase family. IleS type 2 subfamily. As to quaternary structure, monomer. The cofactor is Zn(2+).

Its subcellular location is the cytoplasm. The catalysed reaction is tRNA(Ile) + L-isoleucine + ATP = L-isoleucyl-tRNA(Ile) + AMP + diphosphate. Its function is as follows. Catalyzes the attachment of isoleucine to tRNA(Ile). As IleRS can inadvertently accommodate and process structurally similar amino acids such as valine, to avoid such errors it has two additional distinct tRNA(Ile)-dependent editing activities. One activity is designated as 'pretransfer' editing and involves the hydrolysis of activated Val-AMP. The other activity is designated 'posttransfer' editing and involves deacylation of mischarged Val-tRNA(Ile). In Protochlamydia amoebophila (strain UWE25), this protein is Isoleucine--tRNA ligase.